Here is a 139-residue protein sequence, read N- to C-terminus: D-ribose pyranase (139 aa).

The active-site Proton donor is His20. Residues Asp28, His106, and 128–130 (YAN) each bind substrate.

The protein belongs to the RbsD / FucU family. RbsD subfamily. In terms of assembly, homodecamer.

It is found in the cytoplasm. The catalysed reaction is beta-D-ribopyranose = beta-D-ribofuranose. Its pathway is carbohydrate metabolism; D-ribose degradation; D-ribose 5-phosphate from beta-D-ribopyranose: step 1/2. Catalyzes the interconversion of beta-pyran and beta-furan forms of D-ribose. The sequence is that of D-ribose pyranase from Escherichia coli O6:H1 (strain CFT073 / ATCC 700928 / UPEC).